The primary structure comprises 265 residues: Eukaryotic translation initiation factor 3 subunit J (265 aa).

Composition is skewed to acidic residues over residues 1-12 (MAPERWDDEEDS) and 26-44 (DEEE…DSEV). 2 disordered regions span residues 1-113 (MAPE…DADL) and 212-265 (TMSN…DDFM). 2 stretches are compositionally biased toward basic and acidic residues: residues 45–65 (EREK…EAAA) and 73–86 (RIQE…KKAE). Residues 61 to 95 (AEAAAKKKSKSQRIQEHKEERKKKAEEEDSDSEEE) adopt a coiled-coil conformation. The span at 87–97 (EEDSDSEEEDD) shows a compositional bias: acidic residues. The segment covering 216–228 (EKMREERAADKGS) has biased composition (basic and acidic residues). Positions 251 to 265 (DYDNGDDGLGDDDFM) are enriched in acidic residues.

Belongs to the eIF-3 subunit J family. Component of the eukaryotic translation initiation factor 3 (eIF-3) complex.

It localises to the cytoplasm. In terms of biological role, component of the eukaryotic translation initiation factor 3 (eIF-3) complex, which is involved in protein synthesis of a specialized repertoire of mRNAs and, together with other initiation factors, stimulates binding of mRNA and methionyl-tRNAi to the 40S ribosome. The eIF-3 complex specifically targets and initiates translation of a subset of mRNAs involved in cell proliferation. The polypeptide is Eukaryotic translation initiation factor 3 subunit J (hcr1) (Aspergillus oryzae (strain ATCC 42149 / RIB 40) (Yellow koji mold)).